The sequence spans 739 residues: Putative apoptosis-inducing factor 1, mitochondrial (739 aa).

The N-terminal 42 residues, Met1 to Pro42, are a transit peptide targeting the mitochondrion. Residues Tyr257–Asp564 form an FAD-dependent oxidoreductase region. FAD-binding positions include Gly261–Ala265, Arg295, Lys300, Val358, Arg410, Asp564, and His580–His581. The interval Val644–Pro681 is disordered. Residues Pro656 to Gly676 are compositionally biased toward low complexity.

This sequence belongs to the FAD-dependent oxidoreductase family. FAD is required as a cofactor.

Its subcellular location is the mitochondrion intermembrane space. The enzyme catalyses A + NADH + H(+) = AH2 + NAD(+). Probable NADH oxidoreductase. Mitochondrial effector of cell death that plays roles in developmentally regulated cell death and normal mitochondrial function. The protein is Putative apoptosis-inducing factor 1, mitochondrial (AIF) of Drosophila melanogaster (Fruit fly).